Here is a 226-residue protein sequence, read N- to C-terminus: PKHD-type hydroxylase Daci_1172 (226 aa).

Residues 78 to 178 (KVLPPRFNRY…RYASFFWTHS (101 aa)) enclose the Fe2OG dioxygenase domain. H96, D98, and H159 together coordinate Fe cation. 2-oxoglutarate is bound at residue R169.

It depends on Fe(2+) as a cofactor. L-ascorbate is required as a cofactor.

This chain is PKHD-type hydroxylase Daci_1172, found in Delftia acidovorans (strain DSM 14801 / SPH-1).